The chain runs to 101 residues: Urease subunit beta (101 aa).

It belongs to the urease beta subunit family. Heterotrimer of UreA (gamma), UreB (beta) and UreC (alpha) subunits. Three heterotrimers associate to form the active enzyme.

It localises to the cytoplasm. The catalysed reaction is urea + 2 H2O + H(+) = hydrogencarbonate + 2 NH4(+). It participates in nitrogen metabolism; urea degradation; CO(2) and NH(3) from urea (urease route): step 1/1. In Polaromonas naphthalenivorans (strain CJ2), this protein is Urease subunit beta.